Consider the following 149-residue polypeptide: D-aminoacyl-tRNA deacylase (149 aa).

The Gly-cisPro motif, important for rejection of L-amino acids motif lies at 137-138 (GP).

Belongs to the DTD family. Homodimer.

The protein resides in the cytoplasm. It catalyses the reaction glycyl-tRNA(Ala) + H2O = tRNA(Ala) + glycine + H(+). It carries out the reaction a D-aminoacyl-tRNA + H2O = a tRNA + a D-alpha-amino acid + H(+). Functionally, an aminoacyl-tRNA editing enzyme that deacylates mischarged D-aminoacyl-tRNAs. Also deacylates mischarged glycyl-tRNA(Ala), protecting cells against glycine mischarging by AlaRS. Acts via tRNA-based rather than protein-based catalysis; rejects L-amino acids rather than detecting D-amino acids in the active site. By recycling D-aminoacyl-tRNA to D-amino acids and free tRNA molecules, this enzyme counteracts the toxicity associated with the formation of D-aminoacyl-tRNA entities in vivo and helps enforce protein L-homochirality. The chain is D-aminoacyl-tRNA deacylase from Clostridium botulinum (strain Loch Maree / Type A3).